The chain runs to 113 residues: Phosphoribosyl-ATP pyrophosphatase (113 aa).

It belongs to the PRA-PH family.

The protein localises to the cytoplasm. The catalysed reaction is 1-(5-phospho-beta-D-ribosyl)-ATP + H2O = 1-(5-phospho-beta-D-ribosyl)-5'-AMP + diphosphate + H(+). Its pathway is amino-acid biosynthesis; L-histidine biosynthesis; L-histidine from 5-phospho-alpha-D-ribose 1-diphosphate: step 2/9. The polypeptide is Phosphoribosyl-ATP pyrophosphatase (Janthinobacterium sp. (strain Marseille) (Minibacterium massiliensis)).